The chain runs to 432 residues: Adenylosuccinate synthetase (432 aa).

GTP-binding positions include 16–22 and 44–46; these read GDEGKGK and GHM. Asp-17 serves as the catalytic Proton acceptor. Residues Asp-17 and Gly-44 each coordinate Mg(2+). Residues 17–20, 42–45, Thr-132, Arg-146, Gln-226, Thr-241, and Arg-305 contribute to the IMP site; these read DEGK and NAGH. His-45 serves as the catalytic Proton donor. A substrate-binding site is contributed by 301–307; sequence LNTGRPR. GTP is bound by residues Arg-307, 333 to 335, and 415 to 417; these read LFD and SVG.

It belongs to the adenylosuccinate synthetase family. Homodimer. The cofactor is Mg(2+).

It is found in the cytoplasm. The catalysed reaction is IMP + L-aspartate + GTP = N(6)-(1,2-dicarboxyethyl)-AMP + GDP + phosphate + 2 H(+). The protein operates within purine metabolism; AMP biosynthesis via de novo pathway; AMP from IMP: step 1/2. Functionally, plays an important role in the de novo pathway of purine nucleotide biosynthesis. Catalyzes the first committed step in the biosynthesis of AMP from IMP. This is Adenylosuccinate synthetase from Mycoplasma mycoides subsp. mycoides SC (strain CCUG 32753 / NCTC 10114 / PG1).